We begin with the raw amino-acid sequence, 230 residues long: Ribonuclease 3 (230 aa).

Positions 5-125 (YSRFYNILGY…VIGAIYLDSD (121 aa)) constitute an RNase III domain. Residue E40 participates in Mg(2+) binding. D44 is a catalytic residue. Mg(2+)-binding residues include D111 and E114. Residue E114 is part of the active site. The DRBM domain maps to 153 to 223 (DSKSKLQEIL…AEKMIEMLSQ (71 aa)).

It belongs to the ribonuclease III family. In terms of assembly, homodimer. Mg(2+) serves as cofactor.

The protein resides in the cytoplasm. The enzyme catalyses Endonucleolytic cleavage to 5'-phosphomonoester.. In terms of biological role, digests double-stranded RNA. Involved in the processing of primary rRNA transcript to yield the immediate precursors to the large and small rRNAs (23S and 16S). Processes some mRNAs, and tRNAs when they are encoded in the rRNA operon. Processes pre-crRNA and tracrRNA of type II CRISPR loci if present in the organism. The chain is Ribonuclease 3 from Francisella tularensis subsp. holarctica (strain OSU18).